The following is a 604-amino-acid chain: MAKIKKRGVSGNAKNFITRTQAVKKLQVSLSDFRRLCIFKGIYPREPRNKKKANKGSTAPVTFYYAKDIQYLSHEPVLAKFREHKTFAKKLQRALGRGEVSDAQKLEANRPKYTLEHIIKERYPTFLDALRDIDDPLNMLFLFANMPATDKVSHRVTKEAEKLTNQWLAYVAKERLIKKVFVSIKGVYYQANVKGQEIRWLVPFKFPTNIPTDVDFRIMLTFLEFYSTLLHFVLYRLYNDSNLIYPPTIDIEKLKGIGGLSSYVLQSKDQGVSALLPQDKKIVEDDVSVQGKELSTANISKALEADNEGEEHEEVEQETVENVELDKFEASATKTAVDSLVQPSKYASPTSTLFSKFIFYVGREVPLDILELCILSCGGSVVSEVALDDLKTNSPDAYKKLDLSNITHQIIDRPKILQKVAGRTYIQPQWIFDCINKSELLPVNKYAPGETLPPHLSPWGDAGSYNPEAEKVDQSENAEEEEEDEVDEDDEDADEDEEDEEEEDEEEDEDLKAQKELELEAAGVKFSEIAEKEKKAAKKASKKRPAEEDEEKELKKIMMTNKQRKLYKKMQYGIDKKETRTQELAKKKRKIEKTKAQLDKLSKK.

The 100-residue stretch at 349 to 448 (PTSTLFSKFI…ELLPVNKYAP (100 aa)) folds into the BRCT domain. 2 disordered regions span residues 452–562 (LPPH…MTNK) and 579–604 (TRTQ…LSKK). Coiled coils occupy residues 468–522 (EAEK…LEAA) and 573–604 (GIDK…LSKK). Residues 476–510 (ENAEEEEEDEVDEDDEDADEDEEDEEEEDEEEDED) are compositionally biased toward acidic residues. The segment covering 593-604 (KTKAQLDKLSKK) has biased composition (basic and acidic residues).

Belongs to the pescadillo family. In terms of assembly, component of the NOP7 complex, composed of ERB1, NOP7 and YTM1. The complex is held together by ERB1, which interacts with NOP7 via its N-terminal domain and with YTM1 via a high-affinity interaction between the seven-bladed beta-propeller domains of the 2 proteins. The NOP7 complex associates with the 66S pre-ribosome.

It is found in the nucleus. The protein resides in the nucleolus. Its subcellular location is the nucleoplasm. In terms of biological role, component of the NOP7 complex, which is required for maturation of the 25S and 5.8S ribosomal RNAs and formation of the 60S ribosome. This chain is Pescadillo homolog, found in Scheffersomyces stipitis (strain ATCC 58785 / CBS 6054 / NBRC 10063 / NRRL Y-11545) (Yeast).